Here is a 121-residue protein sequence, read N- to C-terminus: Large ribosomal subunit protein bL19 (121 aa).

Belongs to the bacterial ribosomal protein bL19 family.

Functionally, this protein is located at the 30S-50S ribosomal subunit interface and may play a role in the structure and function of the aminoacyl-tRNA binding site. The sequence is that of Large ribosomal subunit protein bL19 from Amoebophilus asiaticus (strain 5a2).